A 98-amino-acid polypeptide reads, in one-letter code: Small ribosomal subunit protein bS6 (98 aa).

Belongs to the bacterial ribosomal protein bS6 family.

Its function is as follows. Binds together with bS18 to 16S ribosomal RNA. The chain is Small ribosomal subunit protein bS6 from Lactobacillus acidophilus (strain ATCC 700396 / NCK56 / N2 / NCFM).